Here is a 148-residue protein sequence, read N- to C-terminus: Putative pre-16S rRNA nuclease (148 aa).

The protein belongs to the YqgF nuclease family.

Its subcellular location is the cytoplasm. Its function is as follows. Could be a nuclease involved in processing of the 5'-end of pre-16S rRNA. This chain is Putative pre-16S rRNA nuclease, found in Nitrosomonas europaea (strain ATCC 19718 / CIP 103999 / KCTC 2705 / NBRC 14298).